Reading from the N-terminus, the 701-residue chain is Pseudouridylate synthase PUS7L (701 aa).

A Phosphoserine modification is found at Ser-79. Asp-339 (nucleophile) is an active-site residue. Positions 424–647 (GFVNYYGPQR…PGCYRQILKH (224 aa)) constitute a TRUD domain.

This sequence belongs to the pseudouridine synthase TruD family.

It carries out the reaction a uridine in mRNA = a pseudouridine in mRNA. Pseudouridine synthase that catalyzes pseudouridylation of mRNAs. The protein is Pseudouridylate synthase PUS7L of Homo sapiens (Human).